The sequence spans 442 residues: Amino-acid acetyltransferase (442 aa).

One can recognise an N-acetyltransferase domain in the interval 295-442 (EQARAATIED…RSKVLSKTIS (148 aa)).

The protein belongs to the acetyltransferase family. ArgA subfamily.

It is found in the cytoplasm. The catalysed reaction is L-glutamate + acetyl-CoA = N-acetyl-L-glutamate + CoA + H(+). It participates in amino-acid biosynthesis; L-arginine biosynthesis; N(2)-acetyl-L-ornithine from L-glutamate: step 1/4. This chain is Amino-acid acetyltransferase, found in Aeromonas salmonicida (strain A449).